We begin with the raw amino-acid sequence, 366 residues long: 5-hydroxytryptamine receptor 1F (366 aa).

At 1 to 24 (MDFLNASDQNLTSEELLNRMPSKI) the chain is on the extracellular side. N-linked (GlcNAc...) asparagine glycans are attached at residues N5 and N10. The chain crosses the membrane as a helical span at residues 25–49 (LVSLTLSGLALMTTTINSLVIAAII). Residues 50–59 (VTRKLHHPAN) lie on the Cytoplasmic side of the membrane. Residues 60–81 (YLICSLAVTDFLVAVLVMPFSI) traverse the membrane as a helical segment. Residues 82-96 (VYIVRESWIMGQVLC) lie on the Extracellular side of the membrane. The cysteines at positions 96 and 172 are disulfide-linked. A helical membrane pass occupies residues 97-119 (DIWLSVDIICCTCSILHLSAIAL). Serotonin contacts are provided by D103 and C107. The DRY motif; important for ligand-induced conformation changes signature appears at 120 to 122 (DRY). Residues 120-139 (DRYRAITDAVEYARKRTPRH) lie on the Cytoplasmic side of the membrane. Residues 140 to 159 (AGIMITIVWVISVFISMPPL) form a helical membrane-spanning segment. At 160 to 178 (FWRHQGTSRDDECVIKHDH) the chain is on the extracellular side. Residues 179 to 202 (IVSTIYSTFGAFYIPLVLILILYY) form a helical membrane-spanning segment. Residues 203 to 291 (KIYRAARTLY…KISGTRERKA (89 aa)) are Cytoplasmic-facing. A helical transmembrane segment spans residues 292–315 (ATTLGLILGAFVICWLPFFVKELV). At 316–327 (VNVCEKCKISEE) the chain is on the extracellular side. A helical transmembrane segment spans residues 328–350 (MSNFLAWLGYLNSLINPLIYTIF). Residues 343-347 (NPLIY) carry the NPxxY motif; important for ligand-induced conformation changes and signaling motif. Topologically, residues 351-366 (NEDFKKAFQKLVRCRY) are cytoplasmic.

It belongs to the G-protein coupled receptor 1 family. As to expression, detected in hippocampus.

The protein resides in the cell membrane. Its function is as follows. G-protein coupled receptor for 5-hydroxytryptamine (serotonin). Also functions as a receptor for various alkaloids and psychoactive substances. Ligand binding causes a conformation change that triggers signaling via guanine nucleotide-binding proteins (G proteins) and modulates the activity of downstream effectors, such as adenylate cyclase. HTR1F is coupled to G(i)/G(o) G alpha proteins and mediates inhibitory neurotransmission by inhibiting adenylate cyclase activity. This chain is 5-hydroxytryptamine receptor 1F (Htr1f), found in Mus musculus (Mouse).